The sequence spans 345 residues: RNA polymerase II holoenzyme cyclin-like subunit (345 aa).

A Cyclin N-terminal domain is found at 53–144; that stretch reads QQINRLGKRM…IGECEFYLIS (92 aa). The tract at residues 256-285 is disordered; it reads GLTPQSSSGLQAMLPPQSPAGEGPAEGNKN.

This sequence belongs to the cyclin family. Cyclin C subfamily. Component of the srb8-11 complex, a regulatory module of the Mediator complex.

The protein localises to the nucleus. Component of the srb8-11 complex. The srb8-11 complex is a regulatory module of the Mediator complex which is itself involved in regulation of basal and activated RNA polymerase II-dependent transcription. The srb8-11 complex may be involved in the transcriptional repression of a subset of genes regulated by Mediator. It may inhibit the association of the Mediator complex with RNA polymerase II to form the holoenzyme complex. The srb8-11 complex phosphorylates the C-terminal domain (CTD) of the largest subunit of RNA polymerase II. The chain is RNA polymerase II holoenzyme cyclin-like subunit (ssn8) from Neurospora crassa (strain ATCC 24698 / 74-OR23-1A / CBS 708.71 / DSM 1257 / FGSC 987).